The chain runs to 588 residues: Zeta-carotene desaturase, chloroplastic/chromoplastic (588 aa).

The N-terminal 49 residues, 1-49, are a transit peptide targeting the chloroplast and chromoplast; the sequence is MATCSAYLCCPATSASLKKRVFPDGSAGFLFFGGRRLSNRLVTPKSVIR.

Belongs to the zeta carotene desaturase family. Monomer and dimer. Decylplastoquinone serves as cofactor. It depends on 6-decylubiquinone as a cofactor.

The protein localises to the plastid. Its subcellular location is the chloroplast. It is found in the chromoplast. It catalyses the reaction 9,9'-di-cis-zeta-carotene + 2 a quinone = 7,7',9,9'-tetra-cis-lycopene + 2 a quinol. Its pathway is carotenoid biosynthesis; lycopene biosynthesis. Catalyzes the conversion of zeta-carotene to lycopene via the intermediary of neurosporene. It carries out two consecutive desaturations (introduction of double bonds) at positions C-7 and C-7'. Shows stereoselectivity toward trans C15-C15'zeta-carotene double bond. The zeta-carotene produced by the phytoene desaturase PDS has a C15-C15' double bond in the cis configuration and it requires isomerization before being recognized as substrate by ZDS. No activity with all-trans-zeta-carotene. The main product is 7,9,7',9'-tetra-cis-lycopene (pro-lycopene). This is Zeta-carotene desaturase, chloroplastic/chromoplastic (ZDS) from Capsicum annuum (Capsicum pepper).